The sequence spans 439 residues: D-erythronate kinase (439 aa).

ATP is bound by residues Ser-253, 366–369, and Gly-412; that span reads GGDV.

Belongs to the four-carbon acid sugar kinase family.

The catalysed reaction is D-erythronate + ATP = 4-phospho-D-erythronate + ADP + H(+). Its function is as follows. Catalyzes the ATP-dependent phosphorylation of D-erythronate to D-erythronate 4-phosphate. Can also phosphorylate D-threonate and 4-hydroxy-L-threonine, with lower efficiency. The sequence is that of D-erythronate kinase from Heliobacterium modesticaldum (strain ATCC 51547 / Ice1).